The following is a 442-amino-acid chain: Protein PhoH2 (442 aa).

The 133-residue stretch at 3-135 (KIYVLDTNVL…LVSKDVLVRV (133 aa)) folds into the PINc domain. 259–266 (GKAGTGKT) lines the ATP pocket.

The protein in the N-terminal section; belongs to the PINc/VapC protein family. It in the C-terminal section; belongs to the PhoH family.

The enzyme catalyses n ATP + n H2O + wound RNA = n ADP + n phosphate + unwound RNA.. The catalysed reaction is ATP + H2O = ADP + phosphate + H(+). It carries out the reaction GTP + H2O = GDP + phosphate + H(+). Unwinds and/or cleaves 5'-tailed RNA in vitro. Has ATPase and GTPase activities. Unlike the protein in mycobacteria there does not seem to be an antitoxin gene upstream, suggesting this is not a toxin-antitoxin system. This chain is Protein PhoH2, found in Bacillus subtilis (strain 168).